Here is a 779-residue protein sequence, read N- to C-terminus: Phosphoribosylformylglycinamidine synthase subunit PurL (779 aa).

His52 is an active-site residue. ATP-binding residues include Tyr55 and Lys94. Residue Glu96 coordinates Mg(2+). Substrate is bound by residues 97–100 (SHNH) and Arg119. The Proton acceptor role is filled by His98. Asp120 contributes to the Mg(2+) binding site. Gln243 is a substrate binding site. Asp271 lines the Mg(2+) pocket. Residue 315–317 (ESQ) coordinates substrate. ATP contacts are provided by Asn523 and Gly560. Asn561 provides a ligand contact to Mg(2+). Residue Ser563 coordinates substrate.

It belongs to the FGAMS family. As to quaternary structure, monomer. Part of the FGAM synthase complex composed of 1 PurL, 1 PurQ and 2 PurS subunits.

It is found in the cytoplasm. It catalyses the reaction N(2)-formyl-N(1)-(5-phospho-beta-D-ribosyl)glycinamide + L-glutamine + ATP + H2O = 2-formamido-N(1)-(5-O-phospho-beta-D-ribosyl)acetamidine + L-glutamate + ADP + phosphate + H(+). It functions in the pathway purine metabolism; IMP biosynthesis via de novo pathway; 5-amino-1-(5-phospho-D-ribosyl)imidazole from N(2)-formyl-N(1)-(5-phospho-D-ribosyl)glycinamide: step 1/2. Part of the phosphoribosylformylglycinamidine synthase complex involved in the purines biosynthetic pathway. Catalyzes the ATP-dependent conversion of formylglycinamide ribonucleotide (FGAR) and glutamine to yield formylglycinamidine ribonucleotide (FGAM) and glutamate. The FGAM synthase complex is composed of three subunits. PurQ produces an ammonia molecule by converting glutamine to glutamate. PurL transfers the ammonia molecule to FGAR to form FGAM in an ATP-dependent manner. PurS interacts with PurQ and PurL and is thought to assist in the transfer of the ammonia molecule from PurQ to PurL. This is Phosphoribosylformylglycinamidine synthase subunit PurL from Prochlorococcus marinus (strain MIT 9515).